Here is an 838-residue protein sequence, read N- to C-terminus: Urease (838 aa).

Residues 402–838 (GGFDTHIHFI…LPLTQDYFVY (437 aa)) form the Urease domain. Positions 407, 409, and 490 each coordinate Ni(2+). An N6-carboxylysine modification is found at Lys490. Residue His492 participates in substrate binding. His519 and His545 together coordinate Ni(2+). His593 serves as the catalytic Proton donor. Residue Asp633 coordinates Ni(2+).

In the C-terminal section; belongs to the metallo-dependent hydrolases superfamily. Urease alpha subunit family. Homohexamer. Requires Ni cation as cofactor. In terms of processing, carboxylation allows a single lysine to coordinate two nickel ions.

The catalysed reaction is urea + 2 H2O + H(+) = hydrogencarbonate + 2 NH4(+). Its pathway is nitrogen metabolism; urea degradation; CO(2) and NH(3) from urea (urease route): step 1/1. The chain is Urease (ure1) from Aspergillus fumigatus (strain ATCC MYA-4609 / CBS 101355 / FGSC A1100 / Af293) (Neosartorya fumigata).